Here is a 230-residue protein sequence, read N- to C-terminus: MSDVAAFTAYPVIAIDGPTASGKGTVAHQIADLLGFHYLDSGSLYRLVAFVSIRENIDDHDVNSLVRIASELDVRFKADHIWLKGEDVSLALRHESVGNQASAIAVHGPVREALRARQRAFLEAPGLVADGRDMGTVIFPEAVLKVFLTASVQARAERRYKQLIAKGFSATVESLSRDLEARDLRDRTRSVAPLRPAEAARLLDSSDMSVDEVVAQVLDWYRQVQGVKAR.

17–25 (GPTASGKGT) is an ATP binding site.

It belongs to the cytidylate kinase family. Type 1 subfamily.

The protein localises to the cytoplasm. The enzyme catalyses CMP + ATP = CDP + ADP. It catalyses the reaction dCMP + ATP = dCDP + ADP. The polypeptide is Cytidylate kinase (Ralstonia nicotianae (strain ATCC BAA-1114 / GMI1000) (Ralstonia solanacearum)).